The chain runs to 650 residues: Secretin OutD (650 aa).

An N-terminal signal peptide occupies residues 1–18; that stretch reads MLLLSGSVLLMASSLAWS. The segment at 20–115 is N0; sequence EFSASFKGTD…LATDRQPGIG (96 aa). The segment at 117 to 181 is N1; sequence EVVTRVVPVN…TIVERVDQTG (65 aa). The N2 stretch occupies residues 182–255; sequence DRNVTTIPLS…MVKQLDRQQA (74 aa). Residues 258–330 form an N3 region; sequence GNTKVIYLKY…DLEQVIAQLD (73 aa). The tract at residues 335–585 is secretin; the sequence is QVLVEAIIAE…LFIRPSIIRD (251 aa). Residues 587–650 are s domain; the sequence is SQFQSASASK…IVAFYPAGGK (64 aa).

It belongs to the bacterial secretin family. GSP D subfamily. As to quaternary structure, forms a cylindrical channel with 15 subunits.

It localises to the cell outer membrane. Involved in a type II secretion system (T2SS, formerly general secretion pathway, GSP) for the export of proteins. Required for the translocation of the multiple pectic enzymes. This subunit forms the outer membrane channel. This chain is Secretin OutD (outD), found in Pectobacterium carotovorum subsp. carotovorum (Erwinia carotovora subsp. carotovora).